The sequence spans 343 residues: Olfactory receptor 6K6 (343 aa).

Over 1–53 the chain is Extracellular; that stretch reads MKQYSVGNQHSNYRSLLFPFLCSQMTQLTASGNQTMVTEFLFSMFPHAHRGGL. A glycan (N-linked (GlcNAc...) asparagine) is linked at Asn-33. The chain crosses the membrane as a helical span at residues 54–74; sequence LFFIPLLLIYGFILTGNLIMF. Over 75 to 82 the chain is Cytoplasmic; that stretch reads IVIQVGMA. The helical transmembrane segment at 83–103 threads the bilayer; sequence LHTPLYFFISVLSFLEICYTT. Residues 104-127 lie on the Extracellular side of the membrane; that stretch reads TTIPKMLSCLISEQKSISVAGCLL. A disulfide bridge links Cys-125 with Cys-217. A helical membrane pass occupies residues 128-148; the sequence is QMYFFHSLGITESCVLTAMAI. Topologically, residues 149 to 167 are cytoplasmic; it reads DRYIAICNPLRYPTIMIPK. The chain crosses the membrane as a helical span at residues 168–188; that stretch reads LCIQLTVGSCFCGFLLVLPEI. Topologically, residues 189-224 are extracellular; the sequence is AWISTLPFCGSNQIHQIFCDFTPVLSLACTDTFLVV. A helical membrane pass occupies residues 225–244; the sequence is IVDAIHAAEIVASFLVIALS. At 245 to 264 the chain is on the cytoplasmic side; it reads YIRIIIVILGMHSAEGHHKA. A helical transmembrane segment spans residues 265 to 285; the sequence is FSTCAAHLAVFLLFFGSVAVM. The Extracellular segment spans residues 286-298; the sequence is YLRFSATYSVFWD. Residues 299-319 traverse the membrane as a helical segment; the sequence is TAIAVTFVILAPFFNPIIYSL. Residues 320–343 lie on the Cytoplasmic side of the membrane; that stretch reads KNKDMKEAIGRLFHYQKRAGWAGK.

It belongs to the G-protein coupled receptor 1 family.

It is found in the cell membrane. Functionally, odorant receptor. In Homo sapiens (Human), this protein is Olfactory receptor 6K6 (OR6K6).